Consider the following 289-residue polypeptide: UPF0276 protein BPP1075 (289 aa).

This sequence belongs to the UPF0276 family.

The polypeptide is UPF0276 protein BPP1075 (Bordetella parapertussis (strain 12822 / ATCC BAA-587 / NCTC 13253)).